Consider the following 147-residue polypeptide: UPF0178 protein VS_2364 (147 aa).

The protein belongs to the UPF0178 family.

The chain is UPF0178 protein VS_2364 from Vibrio atlanticus (strain LGP32) (Vibrio splendidus (strain Mel32)).